Reading from the N-terminus, the 344-residue chain is Dihydroorotase (344 aa).

Positions 14 and 16 each coordinate Zn(2+). Residues histidine 16–arginine 18 and asparagine 42 each bind substrate. Zn(2+) is bound by residues lysine 100, histidine 137, and histidine 175. Lysine 100 is subject to N6-carboxylysine. Histidine 137 contributes to the substrate binding site. Leucine 220 is a substrate binding site. Aspartate 248 is a Zn(2+) binding site. Aspartate 248 is a catalytic residue. Histidine 252 and alanine 264 together coordinate substrate.

It belongs to the metallo-dependent hydrolases superfamily. DHOase family. Class II DHOase subfamily. Homodimer. The cofactor is Zn(2+).

The enzyme catalyses (S)-dihydroorotate + H2O = N-carbamoyl-L-aspartate + H(+). It functions in the pathway pyrimidine metabolism; UMP biosynthesis via de novo pathway; (S)-dihydroorotate from bicarbonate: step 3/3. Catalyzes the reversible cyclization of carbamoyl aspartate to dihydroorotate. In Erythrobacter litoralis (strain HTCC2594), this protein is Dihydroorotase.